Reading from the N-terminus, the 834-residue chain is Taste receptor type 1 member 2 (834 aa).

The signal sequence occupies residues Met-1–Ala-19. Residues Glu-20–Thr-561 lie on the Extracellular side of the membrane. N-linked (GlcNAc...) asparagine glycans are attached at residues Asn-84, Asn-292, Asn-312, Asn-363, Asn-423, Asn-482, and Asn-522. The chain crosses the membrane as a helical span at residues Ile-562–Phe-582. The Cytoplasmic portion of the chain corresponds to Trp-583 to Pro-597. A helical membrane pass occupies residues Met-598–Gly-618. Residues Leu-619–Ala-630 are Extracellular-facing. Residues Leu-631–Val-651 traverse the membrane as a helical segment. At Cys-652 to Ser-676 the chain is on the cytoplasmic side. Residues Val-677–Leu-697 form a helical membrane-spanning segment. Residues Asn-698–Ser-722 lie on the Extracellular side of the membrane. A helical membrane pass occupies residues Leu-723 to Met-743. At Gly-744–Lys-755 the chain is on the cytoplasmic side. The helical transmembrane segment at Phe-756–Ser-776 threads the bilayer. Residues Val-777–Asp-779 lie on the Extracellular side of the membrane. The helical transmembrane segment at Gly-780 to Leu-800 threads the bilayer. Residues Gly-801–Asp-834 are Cytoplasmic-facing.

The protein belongs to the G-protein coupled receptor 3 family. TAS1R subfamily. As to quaternary structure, forms heterodimers with TAS1R3.

The protein localises to the cell membrane. Functionally, putative taste receptor. TAS1R2/TAS1R3 recognizes diverse natural and synthetic sweeteners. This Saimiri sciureus (Common squirrel monkey) protein is Taste receptor type 1 member 2 (TAS1R2).